We begin with the raw amino-acid sequence, 218 residues long: Adenylate kinase (218 aa).

10–15 (GAGKGT) serves as a coordination point for ATP. Positions 30–59 (STGDMLRAAVKAGSPLGLKVKEVMATGGLV) are NMP. AMP contacts are provided by residues threonine 31, arginine 36, 57-59 (GLV), 85-88 (GFPR), and glutamine 92. Residues 122-159 (GRRVHEASGRVYHVDYNPPKVEGKDDVTGEPLVQREDD) are LID. ATP contacts are provided by residues arginine 123 and 132 to 133 (VY). Arginine 156 and arginine 167 together coordinate AMP. An ATP-binding site is contributed by glycine 203.

This sequence belongs to the adenylate kinase family. In terms of assembly, monomer.

The protein localises to the cytoplasm. The enzyme catalyses AMP + ATP = 2 ADP. Its pathway is purine metabolism; AMP biosynthesis via salvage pathway; AMP from ADP: step 1/1. Its function is as follows. Catalyzes the reversible transfer of the terminal phosphate group between ATP and AMP. Plays an important role in cellular energy homeostasis and in adenine nucleotide metabolism. This Hahella chejuensis (strain KCTC 2396) protein is Adenylate kinase.